A 140-amino-acid polypeptide reads, in one-letter code: Pro-vaccinia growth factor (140 aa).

The N-terminal stretch at Met-1 to Phe-18 is a signal peptide. Residues Ala-19–Tyr-100 lie on the Extracellular side of the membrane. N-linked (GlcNAc...) asparagine; by host glycosylation occurs at Asn-34. One can recognise an EGF-like domain in the interval Ala-41 to Gln-81. Cystine bridges form between Cys-45–Cys-58, Cys-53–Cys-69, and Cys-71–Cys-80. The N-linked (GlcNAc...) asparagine; by host glycan is linked to Asn-95. Residues Ile-101–Leu-121 form a helical membrane-spanning segment. Residues Ser-122–Pro-140 lie on the Cytoplasmic side of the membrane.

This sequence belongs to the orthopoxvirus OPG019 family. In terms of assembly, vaccinia growth factor interacts with host EGFR and promotes EGFR dimerization.

It is found in the host membrane. It localises to the secreted. Stimulates cellular proliferation (hyperplasia)and mobility around infected cells to promote rapid and efficient spread of infection. This effect is beneficial for virus replication in vivo, because poxviruses replicate possibly better in proliferating cells than in quiescent cells. Acts by binding host EGFR, inducing its dimerization, autophosphorylation and leading to activation of several cellular pathways regulating cell proliferation or cell survival. The activation by host EGFR of mitogen activated protein kinases (MAPK) and extracellular-signal regulated kinases (ERK) are essential for the positive effect of vaccinia growth factor on poxvirus virulence in vivo. The chain is Pro-vaccinia growth factor (OPG019) from Homo sapiens (Human).